Consider the following 68-residue polypeptide: Large ribosomal subunit protein bL35 (68 aa).

Composition is skewed to basic residues over residues 1 to 15 (MPKM…KRFK) and 23 to 38 (TARK…HKSS). The disordered stretch occupies residues 1 to 38 (MPKMKSHSGTKKRFKVTGSGKVTARKAGKRHLNEHKSS).

The protein belongs to the bacterial ribosomal protein bL35 family.

In Cutibacterium acnes (strain DSM 16379 / KPA171202) (Propionibacterium acnes), this protein is Large ribosomal subunit protein bL35.